A 292-amino-acid polypeptide reads, in one-letter code: 11-beta-hydroxysteroid dehydrogenase 1 (292 aa).

The Cytoplasmic segment spans residues 2 to 7; that stretch reads HFMKKY. A helical; Signal-anchor for type II membrane protein membrane pass occupies residues 8-24; it reads LLPILVLFLAYYYYSTK. The Lumenal portion of the chain corresponds to 25–292; it reads EEFRPEMLQG…SFTFDKLISS (268 aa). NADP(+)-binding positions include 41–67, 92–93, and 119–121; these read GASK…TARS, TM, and NHI. Asn162 is a glycosylation site (N-linked (GlcNAc...) asparagine). Residue Ser170 coordinates substrate. Tyr183 serves as the catalytic Proton acceptor. 183-187 serves as a coordination point for NADP(+); it reads YSASK. Asn207 carries an N-linked (GlcNAc...) asparagine glycan. 218-222 is a binding site for NADP(+); it reads INTET.

This sequence belongs to the short-chain dehydrogenases/reductases (SDR) family. As to quaternary structure, homodimer. In terms of tissue distribution, detected in adrenal gland, liver, kidney, testis, and at lower levels in brain and lung (at protein level).

The protein resides in the endoplasmic reticulum membrane. It carries out the reaction an 11beta-hydroxysteroid + NADP(+) = an 11-oxosteroid + NADPH + H(+). The enzyme catalyses corticosterone + NADP(+) = 11-dehydrocorticosterone + NADPH + H(+). It catalyses the reaction a 7beta-hydroxysteroid + NADP(+) = a 7-oxosteroid + NADPH + H(+). The catalysed reaction is 7-oxocholesterol + NADPH + H(+) = 7beta-hydroxycholesterol + NADP(+). It carries out the reaction 7-oxocholesterol + NADPH + H(+) = 7alpha-hydroxycholesterol + NADP(+). The enzyme catalyses chenodeoxycholate + NADP(+) = 7-oxolithocholate + NADPH + H(+). It catalyses the reaction 7-oxolithocholate + NADPH + H(+) = ursodeoxycholate + NADP(+). The catalysed reaction is glycochenodeoxycholate + NADP(+) = 7-oxoglycolithocholate + NADPH + H(+). It carries out the reaction taurochenodeoxycholate + NADP(+) = 7-oxotaurolithocholate + NADPH + H(+). The enzyme catalyses tauroursodeoxycholate + NADP(+) = 7-oxotaurolithocholate + NADPH + H(+). It catalyses the reaction glycoursodeoxycholate + NADP(+) = 7-oxoglycolithocholate + NADPH + H(+). The catalysed reaction is 7-oxopregnenolone + NADPH + H(+) = 7beta-hydroxypregnenolone + NADP(+). It carries out the reaction 3beta,7alpha-dihydroxyandrost-5-en-17-one + NADP(+) = 3beta-hydroxy-5-androstene-7,17-dione + NADPH + H(+). The enzyme catalyses 3beta-hydroxy-5-androstene-7,17-dione + NADPH + H(+) = 3beta,7beta-dihydroxyandrost-5-en-17-one + NADP(+). It catalyses the reaction 3beta-hydroxy-5alpha-androstane-7,17-dione + NADPH + H(+) = 3beta,7beta-dihydroxy-5alpha-androstan-17-one + NADP(+). The protein operates within steroid metabolism. Functionally, controls the reversible conversion of biologically active glucocorticoids such as 11-dehydrocorticosterone to corticosterone in the presence of NADP(H). Participates in the corticosteroid receptor-mediated anti-inflammatory response, as well as metabolic and homeostatic processes. Bidirectional in vitro, predominantly functions as a reductase in vivo, thereby increasing the concentration of active glucocorticoids. It has broad substrate specificity, besides glucocorticoids, it accepts other steroid and sterol substrates. Interconverts 7-oxo- and 7-hydroxy-neurosteroids such as 7-oxopregnenolone and 7beta-hydroxypregnenolone, 7-oxodehydroepiandrosterone (3beta-hydroxy-5-androstene-7,17-dione) and 7beta-hydroxydehydroepiandrosterone (3beta,7beta-dihydroxyandrost-5-en-17-one), among others. Catalyzes reversibly the conversion of the major dietary oxysterol, 7-ketocholesterol (7-oxocholesterol), into the more polar 7-beta-hydroxycholesterol and 7-alpha-hhydroxycholesterol metabolites. 7-oxocholesterol is one of the most important oxysterols, it participates in several events such as induction of apoptosis, accumulation in atherosclerotic lesions, lipid peroxidation, and induction of foam cell formation. Mediates the 7-oxo reduction of 7-oxolithocholate mainly to chenodeoxycholate, and to a lesser extent to ursodeoxycholate, both in its free form and when conjugated to glycine or taurine, providing a link between glucocorticoid activation and bile acid metabolism. Catalyzes the synthesis of 7-beta-25-dihydroxycholesterol from 7-oxo-25-hydroxycholesterol in vitro, which acts as a ligand for the G-protein-coupled receptor (GPCR) Epstein-Barr virus-induced gene 2 (EBI2) and may thereby regulate immune cell migration. This chain is 11-beta-hydroxysteroid dehydrogenase 1 (HSD11B1), found in Mesocricetus auratus (Golden hamster).